We begin with the raw amino-acid sequence, 472 residues long: Membrane-bound acylglycerophosphatidylinositol O-acyltransferase MBOAT7 (472 aa).

Residues 1-5 (MSPEE) lie on the Cytoplasmic side of the membrane. Residues 6–22 (WTYLVVLLISIPIGFLF) traverse the membrane as a helical segment. Residues 23–33 (KKAGPGLKRWG) are Lumenal-facing. A helical membrane pass occupies residues 34–57 (AAAVGLGLTLFTCGPHTLHSLVTI). Residues 58–73 (LGTWALIQAQPCSCHA) lie on the Cytoplasmic side of the membrane. The chain crosses the membrane as a helical span at residues 74-93 (LALAWTFSYLLFFRALSLLG). The Lumenal segment spans residues 94–194 (LPTPTPFTNA…VPSLRPLLRR (101 aa)). The chain crosses the membrane as a helical span at residues 195-212 (AWPAPLFGLLFLLSSHLF). The Cytoplasmic segment spans residues 213–231 (PLEAVREDAFYARPLPARL). A helical membrane pass occupies residues 232–261 (FYMIPVFFAFRMRFYVAWIAAECGCIAAGF). Over 262 to 426 (GAYPVAAKAR…LSLRDTLRYW (165 aa)) the chain is Lumenal. The N-linked (GlcNAc...) asparagine glycan is linked to asparagine 321. A helical membrane pass occupies residues 427–447 (ASVYFCVHVLALAALGLGLAL). The Cytoplasmic segment spans residues 448-472 (GRGGPGRRKSGAPAPSPASGKLREE). The tract at residues 450–472 (GGPGRRKSGAPAPSPASGKLREE) is disordered.

The protein belongs to the membrane-bound acyltransferase family. Interacts with SPTSSA; the interaction facilitates MBOAT7 location to mitochondria-associated membranes (MAMs).

The protein localises to the endoplasmic reticulum membrane. The catalysed reaction is a 1-acyl-sn-glycero-3-phospho-(1D-myo-inositol) + an acyl-CoA = a 1,2-diacyl-sn-glycero-3-phospho-(1D-myo-inositol) + CoA. The enzyme catalyses a 1-acyl-sn-glycero-3-phospho-(1D-myo-inositol) + (5Z,8Z,11Z,14Z)-eicosatetraenoyl-CoA = a 1-acyl-2-(5Z,8Z,11Z,14Z-eicosatetraenoyl)-sn-glycero-3-phospho-(1D-myo-inositol) + CoA. It carries out the reaction (5Z,8Z,11Z,14Z)-eicosatetraenoyl-CoA + 1-hexadecanoyl-sn-glycero-3-phosphocholine = 1-hexadecanoyl-2-(5Z,8Z,11Z,14Z-eicosatetraenoyl)-sn-glycero-3-phosphocholine + CoA. It catalyses the reaction 1-octadecanoyl-sn-glycero-3-phospho-(1D-myo-inositol) + (5Z,8Z,11Z,14Z)-eicosatetraenoyl-CoA = 1-octadecanoyl-2-(5Z,8Z,11Z,14Z-eicosatetraenoyl)-sn-glycero-3-phospho-(1D-myo-inositol) + CoA. It participates in lipid metabolism; phospholipid metabolism. Functionally, acyltransferase which catalyzes the transfer of an acyl group from an acyl-CoA to a lysophosphatidylinositol (1-acylglycerophosphatidylinositol or LPI) leading to the production of a phosphatidylinositol (1,2-diacyl-sn-glycero-3-phosphoinositol or PI) and participates in the reacylation step of the phospholipid remodeling pathway also known as the Lands cycle. Prefers arachidonoyl-CoA as the acyl donor, thus contributing to the regulation of free levels arachidonic acid in cell. In liver, participates in the regulation of triglyceride metabolism through the phosphatidylinositol acyl-chain remodeling regulation. The sequence is that of Membrane-bound acylglycerophosphatidylinositol O-acyltransferase MBOAT7 (MBOAT7) from Bos taurus (Bovine).